The following is a 431-amino-acid chain: Glutamyl-tRNA reductase (431 aa).

Residues 49–52 (TCDR), Ser-109, 114–116 (EPH), and Gln-120 each bind substrate. Cys-50 acts as the Nucleophile in catalysis. Residue 189-194 (GTQEMG) coordinates NADP(+).

This sequence belongs to the glutamyl-tRNA reductase family. As to quaternary structure, homodimer.

It catalyses the reaction (S)-4-amino-5-oxopentanoate + tRNA(Glu) + NADP(+) = L-glutamyl-tRNA(Glu) + NADPH + H(+). Its pathway is porphyrin-containing compound metabolism; protoporphyrin-IX biosynthesis; 5-aminolevulinate from L-glutamyl-tRNA(Glu): step 1/2. It participates in porphyrin-containing compound metabolism; chlorophyll biosynthesis. Catalyzes the NADPH-dependent reduction of glutamyl-tRNA(Glu) to glutamate 1-semialdehyde (GSA). This is Glutamyl-tRNA reductase from Rhodospirillum rubrum (strain ATCC 11170 / ATH 1.1.1 / DSM 467 / LMG 4362 / NCIMB 8255 / S1).